We begin with the raw amino-acid sequence, 448 residues long: Chromosomal replication initiator protein DnaA 1 (448 aa).

Residues 1-76 form a domain I, interacts with DnaA modulators region; that stretch reads MLTSETQNVW…FLPVDMSGEP (76 aa). The tract at residues 76–111 is domain II; sequence PAIRFIIAPPQKKIIPPNHFSISSSQKEEQSPNSDV. Positions 112–328 are domain III, AAA+ region; sequence KLNNNYRFEN…GAINRLSAHC (217 aa). Gly-156, Gly-158, Lys-159, and Thr-160 together coordinate ATP. Residues 329–448 form a domain IV, binds dsDNA region; it reads RLLDLNITEE…IGMVRRNIES (120 aa).

Belongs to the DnaA family. In terms of assembly, oligomerizes as a right-handed, spiral filament on DNA at oriC.

It localises to the cytoplasm. Functionally, plays an essential role in the initiation and regulation of chromosomal replication. ATP-DnaA binds to the origin of replication (oriC) to initiate formation of the DNA replication initiation complex once per cell cycle. Binds the DnaA box (a 9 base pair repeat at the origin) and separates the double-stranded (ds)DNA. Forms a right-handed helical filament on oriC DNA; dsDNA binds to the exterior of the filament while single-stranded (ss)DNA is stabiized in the filament's interior. The ATP-DnaA-oriC complex binds and stabilizes one strand of the AT-rich DNA unwinding element (DUE), permitting loading of DNA polymerase. After initiation quickly degrades to an ADP-DnaA complex that is not apt for DNA replication. Binds acidic phospholipids. In Protochlamydia amoebophila (strain UWE25), this protein is Chromosomal replication initiator protein DnaA 1.